We begin with the raw amino-acid sequence, 1089 residues long: Importin subunit beta-3 (1089 aa).

Serine 2 is modified (N-acetylserine). HEAT repeat units follow at residues glutamate 6–isoleucine 39, isoleucine 44–alanine 78, lysine 96–cysteine 129, proline 138–threonine 165, isoleucine 175–glutamine 207, leucine 216–leucine 252, methionine 260–asparagine 295, glutamine 304–leucine 359, glycine 361–alanine 395, alanine 399–phenylalanine 439, proline 441–phenylalanine 481, lysine 484–alanine 524, asparagine 526–valine 568, glutamate 571–leucine 613, aspartate 615–leucine 689, glutamine 692–alanine 735, glutamate 742–methionine 781, glutamate 788–threonine 849, histidine 852–glycine 890, lysine 898–tyrosine 930, valine 938–tyrosine 978, aspartate 986–glutamate 1017, asparagine 1028–phenylalanine 1063, and serine 1066–alanine 1089. At threonine 830 the chain carries Phosphothreonine.

Belongs to the importin beta family. Importin beta-3 subfamily. Interacts with Ran (GSP1); interacts specifically with the GTP-bound form of Ran (GTP-Ran), protecting it from GTP hydrolysis and nucleotide exchange. Interacts with RPL25; this interaction is dissociated by binding to Ran-GTP. Interacts with YAP1; this interaction is dissociated by binding to Ran-GTP. Interacts with NOP1; via its rg-NLS. Interacts with SOF1; via its cNLS. Interacts with histones H3 and H4; via their NLS. Interacts with ABF1.

It localises to the cytoplasm. It is found in the nucleus. Functionally, functions in nuclear protein import as nuclear transport receptor. Serves as receptor for classical and arginine/glycine-rich nuclear localization signals (cNLS and rg-NLS) in cargo substrates. Its predominant cargo substrate seems to be ribosomal proteins and ribosome biogenesis trans- and cis-acting factors. Required for nuclear transport of YAP1, NOP1 and SOF1. Mediates the nuclear import of histones H3 and H4. Mediates docking of the importin/substrate complex to the nuclear pore complex (NPC) through binding to repeat-containing nucleoporins. The complex is subsequently translocated through the pore by an energy requiring, Ran-dependent mechanism. At the nucleoplasmic side of the NPC, GTP-Ran binding leads to release of the cargo. The importin is re-exported from the nucleus to the cytoplasm where GTP hydrolysis releases Ran from importin. The directionality of nuclear import is thought to be conferred by an asymmetric distribution of the GTP- and GDP-bound forms of Ran between the cytoplasm and nucleus. In terms of biological role, plays a role in protein secretion. This Saccharomyces cerevisiae (strain ATCC 204508 / S288c) (Baker's yeast) protein is Importin subunit beta-3.